The chain runs to 716 residues: Polyribonucleotide nucleotidyltransferase (716 aa).

Mg(2+)-binding residues include Asp480 and Asp486. The region spanning 547-606 (PKIVQLQIDIDKISLVIGSTGKTVKAITDEFEVKVQIEQNGKIILFGDDDFKMQKAKERI) is the KH domain. Positions 616–711 (GEIYEGTVKK…KFGKIDLEIV (96 aa)) constitute an S1 motif domain.

Belongs to the polyribonucleotide nucleotidyltransferase family. Requires Mg(2+) as cofactor.

Its subcellular location is the cytoplasm. The enzyme catalyses RNA(n+1) + phosphate = RNA(n) + a ribonucleoside 5'-diphosphate. Functionally, involved in mRNA degradation. Catalyzes the phosphorolysis of single-stranded polyribonucleotides processively in the 3'- to 5'-direction. The protein is Polyribonucleotide nucleotidyltransferase of Borreliella burgdorferi (strain ATCC 35210 / DSM 4680 / CIP 102532 / B31) (Borrelia burgdorferi).